The sequence spans 640 residues: Threonine--tRNA ligase (640 aa).

Residues 1–61 (MPTITLPDGS…ENDASLQIIT (61 aa)) form the TGS domain. The catalytic stretch occupies residues 242 to 533 (DHRKIGKRLG…LIEHYEGAFP (292 aa)). The Zn(2+) site is built by Cys333, His384, and His510.

It belongs to the class-II aminoacyl-tRNA synthetase family. In terms of assembly, homodimer. Zn(2+) serves as cofactor.

The protein resides in the cytoplasm. It carries out the reaction tRNA(Thr) + L-threonine + ATP = L-threonyl-tRNA(Thr) + AMP + diphosphate + H(+). Its function is as follows. Catalyzes the attachment of threonine to tRNA(Thr) in a two-step reaction: L-threonine is first activated by ATP to form Thr-AMP and then transferred to the acceptor end of tRNA(Thr). Also edits incorrectly charged L-seryl-tRNA(Thr). The polypeptide is Threonine--tRNA ligase (Pseudomonas savastanoi pv. phaseolicola (strain 1448A / Race 6) (Pseudomonas syringae pv. phaseolicola (strain 1448A / Race 6))).